A 224-amino-acid polypeptide reads, in one-letter code: Cytidylate kinase (224 aa).

Glycine 11 to threonine 19 serves as a coordination point for ATP.

Belongs to the cytidylate kinase family. Type 1 subfamily.

Its subcellular location is the cytoplasm. The catalysed reaction is CMP + ATP = CDP + ADP. It catalyses the reaction dCMP + ATP = dCDP + ADP. This is Cytidylate kinase (cmk) from Bacillus subtilis (strain 168).